A 264-amino-acid polypeptide reads, in one-letter code: 2-hydroxyhexa-2,4-dienoate hydratase (264 aa).

This sequence belongs to the hydratase/decarboxylase family.

The catalysed reaction is (2Z,4Z)-2-hydroxyhexa-2,4-dienoate + H2O = 4-hydroxy-2-oxohexanoate. Involved in the catatabolism of testosterone. Catalyzes the hydration of 2-hydroxyhexa-2,4-dienoic acid to 4-hydroxy-2-oxohexanoic acid. The polypeptide is 2-hydroxyhexa-2,4-dienoate hydratase (tesE) (Comamonas testosteroni (Pseudomonas testosteroni)).